The sequence spans 31 residues: Cuticle protein 54 (31 aa).

2 consecutive repeat copies span residues 7-10 (AAPA) and 13-17 (AAPAI).

Component of the cuticle of migratory locust which contains more than 100 different structural proteins. This chain is Cuticle protein 54, found in Locusta migratoria (Migratory locust).